Here is a 427-residue protein sequence, read N- to C-terminus: Trigger factor (427 aa).

A PPIase FKBP-type domain is found at 163–248; sequence GNIAIIDFKG…VKGIKVKELP (86 aa).

Belongs to the FKBP-type PPIase family. Tig subfamily.

It is found in the cytoplasm. The enzyme catalyses [protein]-peptidylproline (omega=180) = [protein]-peptidylproline (omega=0). Functionally, involved in protein export. Acts as a chaperone by maintaining the newly synthesized protein in an open conformation. Functions as a peptidyl-prolyl cis-trans isomerase. In Clostridium botulinum (strain Alaska E43 / Type E3), this protein is Trigger factor.